A 45-amino-acid chain; its full sequence is Large ribosomal subunit protein bL34 (45 aa).

Belongs to the bacterial ribosomal protein bL34 family.

The protein is Large ribosomal subunit protein bL34 of Acidothermus cellulolyticus (strain ATCC 43068 / DSM 8971 / 11B).